Consider the following 430-residue polypeptide: Probable GPI-anchored adhesin-like protein PGA32 (430 aa).

Residues 1 to 16 (MKVSTLIIVSIPIVSG) form the signal peptide. 4 disordered regions span residues 88–195 (LGQV…TVIN), 232–257 (IASA…RGIK), 278–302 (GGNG…SKYF), and 314–336 (SKSI…SSTD). 2 stretches are compositionally biased toward low complexity: residues 92–112 (TTPS…PTTS) and 122–135 (TDTA…TNAR). A compositionally biased stretch (polar residues) spans 141 to 167 (TPVTVSGDNVLTLFGNPNLSTGNDQSN). Composition is skewed to low complexity over residues 168-187 (SVSK…SSSS) and 233-253 (ASAS…SSSA). Over residues 289-302 (YKNHSTTSTTSKYF) the composition is skewed to polar residues. The span at 314-335 (SKSIYSNSTTSRSSLSVSSSST) shows a compositional bias: low complexity. A lipid anchor (GPI-anchor amidated glycine) is attached at glycine 401. A propeptide spans 402–430 (DGNKLIGGNKYLISFMWTNLILTMIMLFT) (removed in mature form).

Its subcellular location is the cell membrane. In terms of biological role, putative adhesin which is involved in cell adhesion and virulence. The sequence is that of Probable GPI-anchored adhesin-like protein PGA32 (PGA32) from Candida albicans (strain SC5314 / ATCC MYA-2876) (Yeast).